Consider the following 290-residue polypeptide: ATP synthase gamma chain (290 aa).

This sequence belongs to the ATPase gamma chain family. In terms of assembly, F-type ATPases have 2 components, CF(1) - the catalytic core - and CF(0) - the membrane proton channel. CF(1) has five subunits: alpha(3), beta(3), gamma(1), delta(1), epsilon(1). CF(0) has three main subunits: a, b and c.

It is found in the cell inner membrane. In terms of biological role, produces ATP from ADP in the presence of a proton gradient across the membrane. The gamma chain is believed to be important in regulating ATPase activity and the flow of protons through the CF(0) complex. The polypeptide is ATP synthase gamma chain (Bacteroides fragilis (strain YCH46)).